Here is a 94-residue protein sequence, read N- to C-terminus: Long neurotoxin LNTX37 (94 aa).

Positions 1 to 21 are cleaved as a signal peptide; the sequence is MKTLLLTLVVVTIMCLDLGYT. Disulfide bonds link C24–C43, C36–C64, C49–C53, C68–C79, and C80–C85.

Belongs to the three-finger toxin family. Long-chain subfamily. Type II alpha-neurotoxin sub-subfamily. In terms of tissue distribution, expressed by the venom gland.

The protein resides in the secreted. In terms of biological role, binds with high affinity to muscular (alpha-1/CHRNA1) and neuronal (alpha-7/CHRNA7) nicotinic acetylcholine receptor (nAChR) and inhibits acetylcholine from binding to the receptor, thereby impairing neuromuscular and neuronal transmission. The sequence is that of Long neurotoxin LNTX37 from Ophiophagus hannah (King cobra).